Reading from the N-terminus, the 183-residue chain is MVRKLKTHEQKLLKKTDFMSWQVDQQGKQGDMLRKFYVKKREHYALYNTLAAKSREVADLIKNLSESDPFRSKCTEDMLTKFYAAGLVPTSDTLERIGKVTGASFARRRLPVVMRNIGMCESVKTASDLVEQGHVRIGTKLVTDPAFMVTRSSEDMITWTKASKIKKHVMDYNNTRDDFDLMD.

Positions Arg108 to Asn174 constitute an S4 RNA-binding domain.

The protein belongs to the universal ribosomal protein uS4 family. Component of a heterotrimeric complex containing imp3, imp4 and mpp10.

The protein resides in the nucleus. It localises to the nucleolus. Functionally, component of the U3 small nucleolar ribonucleoprotein. Required for the early cleavages at sites A0, A1 and A2 during 18S ribosomal pre-RNA processing. The protein is U3 small nucleolar ribonucleoprotein protein imp3 of Caenorhabditis elegans.